A 229-amino-acid polypeptide reads, in one-letter code: Methyltransferase ctvB (229 aa).

Belongs to the methyltransferase superfamily.

Its pathway is mycotoxin biosynthesis. In terms of biological role, methyltransferase; part of the gene cluster that mediates the biosynthesis of citreoviridin, an inhibitor of the of F1-ATPase beta-subunit. The HR-PKS ctvA accepts acetyl-CoA as the starter unit and catalyzes eight iterations of malonyl-CoA extension and four iterations of SAM-dependent methylation at C4, C12, C14, and C16. The KR and DH domains selectively act on the first six iterations to generate the hexaene chain. In the last three iterations, the KR and DH domains terminate their functions to yield a beta,delta-diketo ester moiety, which then undergoes intramolecular cyclization to yield an alpha-pyrone intermediate. Subsequently, ctvB methylates the alpha-pyrone hydroxyl group to generate citreomontanin. In order to form the tetrahydrofuran ring with the correct stereochemistry, the terminal alkenes of citreomontanin need to undergo isomerization to yield a (17Z)-hexaene, a step that could be catalyzed by ctvC. The (17Z)-hexaene then undergoes bisepoxidation by ctvC to form a (17R,16R,15S,14R)-bisepoxide moiety. Lastly, ctvD acts as a regioselective hydrolase to form the tetrahydrofuran ring with the substituents in the correct absolute configuration, completing the biosynthesis of citreoviridin. This Aspergillus terreus (strain NIH 2624 / FGSC A1156) protein is Methyltransferase ctvB.